Reading from the N-terminus, the 584-residue chain is Phosphoinositide phospholipase C 7 (584 aa).

In terms of domain architecture, EF-hand-like spans 26–102 (EIKTLFDNYS…NSPLSSLEVH (77 aa)). A PI-PLC X-box domain is found at 103-248 (QDMDAPLSHY…LKKRIMISTK (146 aa)). Catalysis depends on residues His118 and His164. Residues 285-318 (DRSVDKNDSNGDDDDDDDDDDDDDDGDDKIKKNA) are disordered. Phosphoserine is present on Ser287. The span at 294–311 (NGDDDDDDDDDDDDDDGD) shows a compositional bias: acidic residues. One can recognise a PI-PLC Y-box domain in the interval 323 to 439 (KHLIAIEAGK…GYIKKPDLLL (117 aa)). Residues 433-566 (KKPDLLLKSN…QGIRAVPLRN (134 aa)) enclose the C2 domain.

It depends on Ca(2+) as a cofactor. Expressed in leaves, roots, flowers and siliques.

It localises to the cell membrane. It carries out the reaction a 1,2-diacyl-sn-glycero-3-phospho-(1D-myo-inositol-4,5-bisphosphate) + H2O = 1D-myo-inositol 1,4,5-trisphosphate + a 1,2-diacyl-sn-glycerol + H(+). Its function is as follows. The production of the second messenger molecules diacylglycerol (DAG) and inositol 1,4,5-trisphosphate (IP3) is mediated by activated phosphatidylinositol-specific phospholipase C enzymes. The chain is Phosphoinositide phospholipase C 7 (PLC7) from Arabidopsis thaliana (Mouse-ear cress).